The following is a 123-amino-acid chain: Small ribosomal subunit protein uS12 (123 aa).

Position 89 is a 3-methylthioaspartic acid (Asp-89). The tract at residues 100–123 (GSLDTSGVKDRKQGRSKYGAKRPK) is disordered. A compositionally biased stretch (basic residues) spans 113–123 (GRSKYGAKRPK).

It belongs to the universal ribosomal protein uS12 family. In terms of assembly, part of the 30S ribosomal subunit. Contacts proteins S8 and S17. May interact with IF1 in the 30S initiation complex.

In terms of biological role, with S4 and S5 plays an important role in translational accuracy. Functionally, interacts with and stabilizes bases of the 16S rRNA that are involved in tRNA selection in the A site and with the mRNA backbone. Located at the interface of the 30S and 50S subunits, it traverses the body of the 30S subunit contacting proteins on the other side and probably holding the rRNA structure together. The combined cluster of proteins S8, S12 and S17 appears to hold together the shoulder and platform of the 30S subunit. In Pseudomonas aeruginosa (strain LESB58), this protein is Small ribosomal subunit protein uS12.